The sequence spans 448 residues: Putative sodium-coupled neutral amino acid transporter 11 (448 aa).

The segment at 1–20 (MESERSCLLSSHDAGKGGSS) is disordered. The next 11 helical transmembrane spans lie at 22–42 (VSSA…IGLP), 52–72 (MGLL…ILLV), 94–114 (IGYI…MISY), 143–163 (FVIA…RDIA), 165–185 (LGKV…TVVV), 200–220 (AWVF…FALI), 246–266 (ISVG…YATF), 286–306 (TFGR…ECFV), 324–344 (SSHV…SLSY), 346–366 (CLGI…MFIF), and 389–409 (MILV…ALFP). Asn-425, Asn-440, and Asn-444 each carry an N-linked (GlcNAc...) asparagine glycan.

It belongs to the amino acid/polyamine transporter 2 family.

It localises to the membrane. Putative sodium-dependent amino acid/proton antiporter. This Danio rerio (Zebrafish) protein is Putative sodium-coupled neutral amino acid transporter 11 (slc38a11).